A 339-amino-acid polypeptide reads, in one-letter code: MKINIDEKLETTEILIETQDDLWYIKNILNPGDIIEGIAYRRLEKRNDLERSKSTERIPIKVKIKIENLDFQPFTDKIKILGIIIDGDFSGEHQSIMYGPGDTLKIYKNLNEAERDFLNEAVKNEYSSGMIFVSLDEEAADIYLMRSYSLQDMAHIESNKTGKRYDLKYNEKQYFLDIIKALKNIKNVFLLIVLGTGFEPEKLYNEIKKDPFFNNIDVKFYNTYDTGKSGVYNLLNSDATSNIIKESRMAKEKRILETFLRNLNSGLSVYGYDEINNYLDNGAIDTLIISEEKFKMPETRELLNKASGIKIYIISNYTEPGEIIRSFGGYCAILRYKIK.

Belongs to the eukaryotic release factor 1 family. Pelota subfamily. As to quaternary structure, monomer. A divalent metal cation serves as cofactor.

Its subcellular location is the cytoplasm. In terms of biological role, may function in recognizing stalled ribosomes, interact with stem-loop structures in stalled mRNA molecules, and effect endonucleolytic cleavage of the mRNA. May play a role in the release non-functional ribosomes and degradation of damaged mRNAs. Has endoribonuclease activity. The chain is Protein pelota homolog from Picrophilus torridus (strain ATCC 700027 / DSM 9790 / JCM 10055 / NBRC 100828 / KAW 2/3).